A 234-amino-acid chain; its full sequence is Multicopy suppressor of SEC21 protein 27 (234 aa).

At 1–47 (MQTPLESTDVKLDTLNEPSAHLIEKNVALPKDIFRSYLSYWIYEIAR) the chain is on the cytoplasmic side. Thr3 carries the phosphothreonine modification. The helical transmembrane segment at 48 to 68 (YTPVMILSLVIGVLVLLIIFF) threads the bilayer. At 69-72 (NDNE) the chain is on the extracellular side. A helical membrane pass occupies residues 73–93 (ACVFNSAYYAYLSLVVLLIIL). Topologically, residues 94 to 234 (GDGNPKLVSR…NIDALLKKTE (141 aa)) are cytoplasmic. Residues 231–234 (KKTE) are COPI binding.

The protein belongs to the DUP/COS family. Interacts with MST28. Binds to coatomer proteins of COPI and SEC23/SEC24 of COPII coated vesicles.

The protein resides in the endoplasmic reticulum. It localises to the golgi apparatus. The protein localises to the cytoplasmic vesicle. Its subcellular location is the COPI-coated vesicle membrane. It is found in the COPII-coated vesicle membrane. Functionally, involved in protein trafficking vesicle formation, probably by stabilizing of coatomer at the Golgi membrane and thus allowing the efficient formation of COPI coated vesicles. The sequence is that of Multicopy suppressor of SEC21 protein 27 (MST27) from Saccharomyces cerevisiae (strain ATCC 204508 / S288c) (Baker's yeast).